The sequence spans 542 residues: TOM1-like protein 7 (542 aa).

Positions 29–158 (ATSELLRTPD…ELKRCGVKFP (130 aa)) constitute a VHS domain. Position 161 is a phosphoserine (Ser-161). Positions 201–289 (EIESLSLSSL…VLARHDAIAS (89 aa)) constitute a GAT domain. Positions 303–340 (RETSSSLKTCGAAALESADSESSSSSSSSESETDEVED) are disordered. Positions 314–332 (AAALESADSESSSSSSSSE) are enriched in low complexity. Ser-521 carries the phosphoserine modification. The interval 522–542 (FPARATGTSGAATAATVDRQP) is disordered. Low complexity predominate over residues 524 to 542 (ARATGTSGAATAATVDRQP).

The protein belongs to the TOM1 family. In terms of tissue distribution, preferentially expressed in flowers.

Its subcellular location is the membrane. Its function is as follows. Might contribute to the loading of the ESCRT machinery. The protein is TOM1-like protein 7 of Arabidopsis thaliana (Mouse-ear cress).